The following is a 139-amino-acid chain: NADPH-dependent 7-cyano-7-deazaguanine reductase (139 aa).

Cysteine 34 (thioimide intermediate) is an active-site residue. Catalysis depends on aspartate 41, which acts as the Proton donor. Residues 56–58 (IEL) and 75–76 (HE) each bind substrate.

The protein belongs to the GTP cyclohydrolase I family. QueF type 1 subfamily.

The protein resides in the cytoplasm. The catalysed reaction is 7-aminomethyl-7-carbaguanine + 2 NADP(+) = 7-cyano-7-deazaguanine + 2 NADPH + 3 H(+). The protein operates within tRNA modification; tRNA-queuosine biosynthesis. In terms of biological role, catalyzes the NADPH-dependent reduction of 7-cyano-7-deazaguanine (preQ0) to 7-aminomethyl-7-deazaguanine (preQ1). In Nitrosomonas europaea (strain ATCC 19718 / CIP 103999 / KCTC 2705 / NBRC 14298), this protein is NADPH-dependent 7-cyano-7-deazaguanine reductase.